Consider the following 297-residue polypeptide: 33 kDa chaperonin (297 aa).

2 disulfide bridges follow: cysteine 233–cysteine 235 and cysteine 267–cysteine 270.

This sequence belongs to the HSP33 family. In terms of processing, under oxidizing conditions two disulfide bonds are formed involving the reactive cysteines. Under reducing conditions zinc is bound to the reactive cysteines and the protein is inactive.

Its subcellular location is the cytoplasm. Functionally, redox regulated molecular chaperone. Protects both thermally unfolding and oxidatively damaged proteins from irreversible aggregation. Plays an important role in the bacterial defense system toward oxidative stress. The chain is 33 kDa chaperonin from Haemophilus ducreyi (strain 35000HP / ATCC 700724).